The chain runs to 583 residues: Nuclear distribution protein nudE homolog 1 (583 aa).

A coiled-coil region spans residues A14 to R195. Disordered regions lie at residues L34–T68, T211–S339, and H358–Y583. Over residues A35 to E67 the composition is skewed to basic and acidic residues. 5 stretches are compositionally biased toward polar residues: residues P219–K235, R279–T319, S329–S339, N379–I392, and S399–K422. A compositionally biased stretch (low complexity) spans R453–P469. The segment covering R529–G538 has biased composition (polar residues).

The protein belongs to the nudE family. As to quaternary structure, self-associates. Interacts with PAC1.

Its subcellular location is the cytoplasm. The protein resides in the cytoskeleton. Functionally, required for nuclear migration. This Gibberella zeae (strain ATCC MYA-4620 / CBS 123657 / FGSC 9075 / NRRL 31084 / PH-1) (Wheat head blight fungus) protein is Nuclear distribution protein nudE homolog 1 (NDE1).